The sequence spans 142 residues: uncharacterized protein (142 aa).

The Peptidase C39 domain maps to 18–137; sequence QSRSYSCGPA…RIFTGNVLVV (120 aa).

This is an uncharacterized protein from Methanothermobacter thermautotrophicus (strain ATCC 29096 / DSM 1053 / JCM 10044 / NBRC 100330 / Delta H) (Methanobacterium thermoautotrophicum).